A 245-amino-acid polypeptide reads, in one-letter code: Hydrolase pyvD (245 aa).

Residues cysteine 133, aspartate 179, and histidine 211 contribute to the active site.

The protein belongs to the dienelactone hydrolase family.

It participates in secondary metabolite biosynthesis. Functionally, hydrolase; part of the gene cluster that mediates the biosynthesis of pyranoviolin A, a pyranonigrin analog with a C-3 methoxy group. Initially, the PKS portion of pyvA synthesizes C-10 carbon chain from 5 molecules of malonyl-CoA, which is then condensed with the thiolation (T) domain-bound glycine activated by the adenylation (A) domain. The subsequent chain release by Dieckmann condensation (DKC) could be catalyzed by the TE domain present at the C-terminus of pyvA and/or the alpha/beta hydrolase pyvD, installing the tetramic acid moiety. The FAD-dependent monooxygenase pyvC next epoxidizes one of the olefins of the polyketide part, and the epoxide ring-opening induces the dihydro-gamma-pyrone ring formation. The cytochrome P450 monooxygeanse pyvB would be responsible for the 2 consecutive reactions, in which the dihydro-gamma-pyrone is oxidized to gamma-pyrone and C-7 is hydroxylated to yield pyranonigrin F. Finally, the O-methyltransferase pyvH methylates the C-3 hydroxy group to complete the biosynthesis. This Aspergillus violaceofuscus (strain CBS 115571) protein is Hydrolase pyvD.